The primary structure comprises 160 residues: Cytochrome c-type biogenesis protein CcmE (160 aa).

At 1–8 (MNPRRKNR) the chain is on the cytoplasmic side. Residues 9–29 (LILVMLVLVGLGLATALVMYA) traverse the membrane as a helical; Signal-anchor for type II membrane protein segment. At 30 to 160 (LRSNIDLFYT…AVGDNSVRPS (131 aa)) the chain is on the periplasmic side. 2 residues coordinate heme: His-130 and Tyr-134. Basic and acidic residues predominate over residues 133 to 148 (KYTPPEIEDAMKKDHP). Residues 133 to 160 (KYTPPEIEDAMKKDHPAQAVGDNSVRPS) are disordered.

It belongs to the CcmE/CycJ family.

The protein resides in the cell inner membrane. Functionally, heme chaperone required for the biogenesis of c-type cytochromes. Transiently binds heme delivered by CcmC and transfers the heme to apo-cytochromes in a process facilitated by CcmF and CcmH. The sequence is that of Cytochrome c-type biogenesis protein CcmE from Erwinia tasmaniensis (strain DSM 17950 / CFBP 7177 / CIP 109463 / NCPPB 4357 / Et1/99).